We begin with the raw amino-acid sequence, 142 residues long: Small ribosomal subunit protein bS6 (142 aa).

Residues 103-142 (KAAESREQRAPRGEDRPARVVADDVDDSDDDTDDEDSNDE) form a disordered region. Residues 105–124 (AESREQRAPRGEDRPARVVA) are compositionally biased toward basic and acidic residues. Positions 125–142 (DDVDDSDDDTDDEDSNDE) are enriched in acidic residues.

The protein belongs to the bacterial ribosomal protein bS6 family.

Binds together with bS18 to 16S ribosomal RNA. In Hahella chejuensis (strain KCTC 2396), this protein is Small ribosomal subunit protein bS6.